The primary structure comprises 338 residues: DNA-directed RNA polymerase subunit alpha (338 aa).

The tract at residues 1–226 is alpha N-terminal domain (alpha-NTD); sequence MLIAQRPTLT…ELFGLTRELN (226 aa). The segment at 243–338 is alpha C-terminal domain (alpha-CTD); that stretch reads YAESLGTPVE…DDDYAETEQY (96 aa). A disordered region spans residues 319-338; that stretch reads AAAEAYDEANDDDYAETEQY. A compositionally biased stretch (acidic residues) spans 323–338; it reads AYDEANDDDYAETEQY.

The protein belongs to the RNA polymerase alpha chain family. As to quaternary structure, homodimer. The RNAP catalytic core consists of 2 alpha, 1 beta, 1 beta' and 1 omega subunit. When a sigma factor is associated with the core the holoenzyme is formed, which can initiate transcription.

The catalysed reaction is RNA(n) + a ribonucleoside 5'-triphosphate = RNA(n+1) + diphosphate. DNA-dependent RNA polymerase catalyzes the transcription of DNA into RNA using the four ribonucleoside triphosphates as substrates. In Cutibacterium acnes (strain DSM 16379 / KPA171202) (Propionibacterium acnes), this protein is DNA-directed RNA polymerase subunit alpha.